A 472-amino-acid chain; its full sequence is Chromosomal replication initiator protein DnaA (472 aa).

The domain I, interacts with DnaA modulators stretch occupies residues 1–73 (MSNMEHDRWS…LTCWQAEMPE (73 aa)). A domain II region spans residues 73-128 (EVCRIDLTVRSPMRAAVTKEAPAPAEHRRDEHRPAADARSHAAAPAPSNHDALGGS). Positions 89-127 (VTKEAPAPAEHRRDEHRPAADARSHAAAPAPSNHDALGG) are disordered. Positions 97–112 (AEHRRDEHRPAADARS) are enriched in basic and acidic residues. A compositionally biased stretch (low complexity) spans 113 to 124 (HAAAPAPSNHDA). Positions 129 to 351 (PLDPRLTFAS…GAINRLLAHS (223 aa)) are domain III, AAA+ region. Residues Gly176, Gly178, Lys179, and Thr180 each contribute to the ATP site. The tract at residues 352 to 472 (KLNAQPVTLE…VESLKRQLQE (121 aa)) is domain IV, binds dsDNA.

It belongs to the DnaA family. As to quaternary structure, oligomerizes as a right-handed, spiral filament on DNA at oriC.

The protein resides in the cytoplasm. Functionally, plays an essential role in the initiation and regulation of chromosomal replication. ATP-DnaA binds to the origin of replication (oriC) to initiate formation of the DNA replication initiation complex once per cell cycle. Binds the DnaA box (a 9 base pair repeat at the origin) and separates the double-stranded (ds)DNA. Forms a right-handed helical filament on oriC DNA; dsDNA binds to the exterior of the filament while single-stranded (ss)DNA is stabiized in the filament's interior. The ATP-DnaA-oriC complex binds and stabilizes one strand of the AT-rich DNA unwinding element (DUE), permitting loading of DNA polymerase. After initiation quickly degrades to an ADP-DnaA complex that is not apt for DNA replication. Binds acidic phospholipids. This Rhodopseudomonas palustris (strain BisB5) protein is Chromosomal replication initiator protein DnaA.